A 403-amino-acid chain; its full sequence is Argininosuccinate synthase (403 aa).

10–18 provides a ligand contact to ATP; the sequence is AYSGGLDTS. Residues Tyr-88 and Ser-93 each coordinate L-citrulline. ATP is bound at residue Gly-118. Residues Thr-120, Asn-124, and Asp-125 each coordinate L-aspartate. Asn-124 is an L-citrulline binding site. L-citrulline is bound by residues Arg-128, Ser-177, Ser-186, Glu-263, and Tyr-275.

It belongs to the argininosuccinate synthase family. Type 1 subfamily. Homotetramer.

It is found in the cytoplasm. The catalysed reaction is L-citrulline + L-aspartate + ATP = 2-(N(omega)-L-arginino)succinate + AMP + diphosphate + H(+). Its pathway is amino-acid biosynthesis; L-arginine biosynthesis; L-arginine from L-ornithine and carbamoyl phosphate: step 2/3. The polypeptide is Argininosuccinate synthase (Clostridium perfringens (strain ATCC 13124 / DSM 756 / JCM 1290 / NCIMB 6125 / NCTC 8237 / Type A)).